Here is a 375-residue protein sequence, read N- to C-terminus: Alcohol dehydrogenase 1A (375 aa).

Serine 2 is modified (N-acetylserine). Serine 23 is modified (phosphoserine). Tyrosine 35 carries the post-translational modification Phosphotyrosine. Cysteine 47 is a binding site for Zn(2+). Glycine 48–histidine 52 lines the NAD(+) pocket. Residues histidine 68, cysteine 98, cysteine 101, cysteine 104, cysteine 112, and cysteine 175 each coordinate Zn(2+). NAD(+)-binding positions include glycine 200–glycine 205, aspartate 224, lysine 229, isoleucine 270, valine 293–valine 295, alanine 318–tyrosine 320, and arginine 370.

The protein belongs to the zinc-containing alcohol dehydrogenase family. In terms of assembly, dimer of identical or heterodimer of closely related subunits alpha, beta, or gamma that are encoded by genes ADH1A, ADH1B, and ADH1C, respectively. It depends on Zn(2+) as a cofactor.

Its subcellular location is the cytoplasm. The catalysed reaction is a primary alcohol + NAD(+) = an aldehyde + NADH + H(+). It catalyses the reaction a secondary alcohol + NAD(+) = a ketone + NADH + H(+). It carries out the reaction butan-1-ol + NAD(+) = butanal + NADH + H(+). The enzyme catalyses 1-propanol + NAD(+) = propanal + NADH + H(+). The catalysed reaction is propan-2-ol + NAD(+) = acetone + NADH + H(+). In terms of biological role, alcohol dehydrogenase. Oxidizes primary as well as secondary alcohols. Ethanol is a very poor substrate. The polypeptide is Alcohol dehydrogenase 1A (ADH1A) (Macaca mulatta (Rhesus macaque)).